Consider the following 398-residue polypeptide: Potassium channel subfamily K member 4 (398 aa).

Over 1-3 the chain is Cytoplasmic; sequence MRS. Residues 4 to 24 traverse the membrane as a helical segment; it reads TTLLALLALVLLYLVSGALVF. The Extracellular portion of the chain corresponds to 25-88; that stretch reads QALEQPHEQQ…WTNSSNHSSA (64 aa). N-linked (GlcNAc...) asparagine glycans are attached at residues Asn-81 and Asn-84. The helical intramembrane region spans 89–103; the sequence is WNLGSAFFFSGTIIT. K(+) contacts are provided by Thr-104, Ile-105, Gly-106, and Tyr-107. Positions 104 to 109 are selectivity filter 1; it reads TIGYGN. The stretch at 104-110 is an intramembrane region; sequence TIGYGNI. Over 111–118 the chain is Extracellular; sequence VLHTDAGR. The chain crosses the membrane as a helical span at residues 119–151; the sequence is LFCIFYALVGIPLFGMLLAGVGDRLGSSLRRGI. The Cytoplasmic segment spans residues 152–173; that stretch reads GHIEAIFLKWHVPPGLVRSLSA. The chain crosses the membrane as a helical span at residues 174–195; the sequence is VLFLLIGCLLFVLTPTFVFSYM. Residues 196-200 lie on the Extracellular side of the membrane; it reads ESWSK. The segment at residues 201–214 is an intramembrane region (helical); the sequence is LEAIYFVIVTLTTV. Residues Thr-213, Val-214, Gly-215, and Phe-216 each contribute to the K(+) site. Positions 213–218 are selectivity filter 2; that stretch reads TVGFGD. An intramembrane segment occupies 215-220; the sequence is GFGDYV. Residues 221-234 are Extracellular-facing; the sequence is PGDGTGQNSPAYQP. A helical membrane pass occupies residues 235 to 261; the sequence is LVWFWILFGLAYFASVLTTIGNWLRAV. The Cytoplasmic segment spans residues 262–398; the sequence is SRRTRAEMGG…GRLRDKAVPV (137 aa). A compositionally biased stretch (polar residues) spans 282–292; sequence TVTARVTQRTG. The disordered stretch occupies residues 282–398; that stretch reads TVTARVTQRT…GRLRDKAVPV (117 aa). Basic residues predominate over residues 370-389; the sequence is PRGRRRPNPSKKPSRPRGPG.

Belongs to the two pore domain potassium channel (TC 1.A.1.8) family. In terms of assembly, homodimer; disulfide-linked. Forms heterodimers with other 2-pore domain K(+) channel subunits, such as KCNK2 and KCNK10. N-glycosylated. In terms of tissue distribution, expressed in brain, spinal cord and eye. Not detected in heart, skeletal muscle, liver, lungs, kidney and testis.

Its subcellular location is the cell membrane. It is found in the cell projection. The protein resides in the axon. It carries out the reaction K(+)(in) = K(+)(out). The enzyme catalyses Rb(+)(in) = Rb(+)(out). The catalysed reaction is Cs(+)(in) = Cs(+)(out). Its activity is regulated as follows. Activated by arachidonic acid and other polyunsaturated fatty acids. Not affected by volatile general anesthetics such as chloroform, diethyl ether, halothane and isoflurane. Activated at intracellular and extracellular basic pHs. Functionally, k(+) channel that conducts voltage-dependent outward rectifying currents upon membrane depolarization. Voltage sensing is coupled to K(+) electrochemical gradient in an 'ion flux gating' mode where outward but not inward ion flow opens the gate. Converts to voltage-independent 'leak' conductance mode upon stimulation by various stimuli including mechanical membrane stretch, basic pH, temperature and lipids. Homo- and heterodimerizes to form functional channels with distinct regulatory and gating properties. At trigeminal A-beta afferent nerves, the heterodimer of KCNK2/TREK-1 and KCNK4/TRAAK is mostly coexpressed at nodes of Ranvier where it conducts voltage-independent mechanosensitive and thermosensitive currents, allowing rapid action potential repolarization, high speed and high frequence saltatory conduction on myelinated nerves to ensure prompt sensory responses. Permeable to other monovalent cations such as Rb(+) and Cs(+). In Mus musculus (Mouse), this protein is Potassium channel subfamily K member 4.